A 124-amino-acid chain; its full sequence is Holo-[acyl-carrier-protein] synthase (124 aa).

The Mg(2+) site is built by Asp8 and Glu56.

This sequence belongs to the P-Pant transferase superfamily. AcpS family. Requires Mg(2+) as cofactor.

The protein localises to the cytoplasm. It carries out the reaction apo-[ACP] + CoA = holo-[ACP] + adenosine 3',5'-bisphosphate + H(+). Its function is as follows. Transfers the 4'-phosphopantetheine moiety from coenzyme A to a Ser of acyl-carrier-protein. This Maridesulfovibrio salexigens (strain ATCC 14822 / DSM 2638 / NCIMB 8403 / VKM B-1763) (Desulfovibrio salexigens) protein is Holo-[acyl-carrier-protein] synthase.